Consider the following 183-residue polypeptide: Ribosome maturation factor RimP (183 aa).

The protein belongs to the RimP family.

Its subcellular location is the cytoplasm. Its function is as follows. Required for maturation of 30S ribosomal subunits. In Mycobacterium bovis (strain ATCC BAA-935 / AF2122/97), this protein is Ribosome maturation factor RimP.